The chain runs to 196 residues: NADH dehydrogenase [ubiquinone] 1 alpha subcomplex assembly factor 3 (196 aa).

Residues 1-93 constitute a mitochondrion transit peptide; the sequence is MIARTLRTVG…RSVLSWNVNS (93 aa).

It belongs to the NDUFAF3 family. In terms of assembly, together with NdufAF4 associates with mitochondrial complex I assembly intermediates during its biogenesis.

The protein localises to the mitochondrion. Functionally, involved in the assembly of mitochondrial NADH:ubiquinone oxidoreductase complex (complex I). Together with NdufAF4, involved in biogenesis of complex 1 modules N, Q and P-peripheral, but not the P-distal module. Required for recruitment of the complex I assembly factor Timmdc1 to complex 1 assembly intermediates. This chain is NADH dehydrogenase [ubiquinone] 1 alpha subcomplex assembly factor 3, found in Drosophila melanogaster (Fruit fly).